We begin with the raw amino-acid sequence, 407 residues long: Extracellular superoxide dismutase [Cu-Zn] 3 (407 aa).

The signal sequence occupies residues 1 to 19 (MRLLSVLVFLISVISIAKA). The Extracellular segment spans residues 20–386 (DYQYAFCKFN…SESYNDNEPG (367 aa)). 3 N-linked (GlcNAc...) asparagine glycosylation sites follow: Asn51, Asn205, and Asn224. 2 residues coordinate Cu cation: His245 and His247. A glycan (N-linked (GlcNAc...) asparagine) is linked at Asn256. His263 contributes to the Cu cation binding site. Positions 263, 271, 280, and 283 each coordinate Zn(2+). His320 contributes to the Cu cation binding site. Asn321 and Asn364 each carry an N-linked (GlcNAc...) asparagine glycan. A helical transmembrane segment spans residues 387–406 (SSSTVIPFFALIIFSIIFAL). Leu407 is a topological domain (cytoplasmic).

It belongs to the Cu-Zn superoxide dismutase family. Requires Cu cation as cofactor. Zn(2+) is required as a cofactor.

The protein localises to the cell membrane. It catalyses the reaction 2 superoxide + 2 H(+) = H2O2 + O2. Protect the extracellular space from toxic effect of reactive oxygen intermediates by converting superoxyde radicals into hydrogen peroxyde and oxygen. In Dictyostelium discoideum (Social amoeba), this protein is Extracellular superoxide dismutase [Cu-Zn] 3 (sodC).